Here is a 489-residue protein sequence, read N- to C-terminus: Cytochrome P450 monooxygenase trt6 (489 aa).

Residues 10–30 (SLWSFGLWILVILSPVLFFAS) form a helical membrane-spanning segment. N-linked (GlcNAc...) asparagine glycosylation is found at asparagine 364 and asparagine 407. Cysteine 430 is a binding site for heme.

The protein belongs to the cytochrome P450 family. Requires heme as cofactor.

The protein resides in the membrane. It participates in secondary metabolite biosynthesis; terpenoid biosynthesis. Cytochrome P450 monooxygenase; part of the gene cluster that mediates the biosynthesis of terretonin, a fungal meroterpenoid that acts as a mycotoxin. The first step of the pathway is the synthesis of 3,5-dimethylorsellinic acid (DMOA) by the polyketide synthase trt4. DMOA is then prenylated into farnesyl-DMOA by the polyprenyl transferase trt2. Methylation by the methyltransferase trt5 then leads to farnesyl-DMOA methyl ester which is further subject to epoxidation by the FAD-dependent monooxygenase trt8 to yield epoxyfarnesyl-DMOA methyl ester. Cyclization of epoxyfarnesyl-DMOA methyl ester by the terpene cyclase trt1 leads to a tetracycle intermediate which is in turn converted to preterretonin. Dehydrogenase trt9 comes next to transform preterretonin to preterrenoid. The FAD-dependent monooxygenase trt3 is then required for the C-hydroxylation at C16 of preterrenoid to yield terrenoid. The cytochrome P450 trt6 catalyzes three successive oxidations to transform terrenoid into an unstable intermediate, which then undergoes the D-ring expansion and unusual rearrangement of the methoxy group to afford the core skeleton of terretonin. Trt14 catalyzes the D-ring expansion of terretonin involving intramolecular methoxy rearrangement as well as the hydrolysis of the expanded D-ring and the methyl ester moiety. Finally, the nonheme iron-dependent dioxygenase trt7 accomplishes the last two oxidation reactions steps to complete the biosynthesis of terretonin. Terretonin C is produced via spontaneous decarboxylation of the terretonin precursor. Another shunt product of the terretonin biosynthesis is dihydrofarnesyl-DMOA, derived from epoxyfarnesyl-DMOA through hydrolysis of the epoxide. The chain is Cytochrome P450 monooxygenase trt6 from Aspergillus terreus (strain NIH 2624 / FGSC A1156).